The primary structure comprises 412 residues: Adenylosuccinate synthetase (412 aa).

GTP contacts are provided by residues 12 to 18 (GDEGKGK) and 40 to 42 (GHE). The Proton acceptor role is filled by D13. Residues D13 and G40 each coordinate Mg(2+). Residues 13–16 (DEGK), 38–41 (NAGH), R134, N212, T227, and R291 each bind IMP. H41 functions as the Proton donor in the catalytic mechanism. 287–293 (TSTGRRR) contributes to the substrate binding site. GTP is bound by residues R293, 318-320 (KLD), and 400-402 (GTG).

This sequence belongs to the adenylosuccinate synthetase family. In terms of assembly, homodimer. Mg(2+) serves as cofactor.

The protein resides in the cytoplasm. It catalyses the reaction IMP + L-aspartate + GTP = N(6)-(1,2-dicarboxyethyl)-AMP + GDP + phosphate + 2 H(+). Its pathway is purine metabolism; AMP biosynthesis via de novo pathway; AMP from IMP: step 1/2. Its function is as follows. Plays an important role in the de novo pathway and in the salvage pathway of purine nucleotide biosynthesis. Catalyzes the first committed step in the biosynthesis of AMP from IMP. This is Adenylosuccinate synthetase from Fusarium vanettenii (strain ATCC MYA-4622 / CBS 123669 / FGSC 9596 / NRRL 45880 / 77-13-4) (Fusarium solani subsp. pisi).